The chain runs to 142 residues: Anti-sigma F factor (142 aa).

It belongs to the anti-sigma-factor family.

The catalysed reaction is L-seryl-[protein] + ATP = O-phospho-L-seryl-[protein] + ADP + H(+). The enzyme catalyses L-threonyl-[protein] + ATP = O-phospho-L-threonyl-[protein] + ADP + H(+). In terms of biological role, binds to sigma F and blocks its ability to form an RNA polymerase holoenzyme (E-sigma F). Phosphorylates SpoIIAA on a serine residue. This phosphorylation may enable SpoIIAA to act as an anti-anti-sigma factor that counteracts SpoIIAB and thus releases sigma F from inhibition. This chain is Anti-sigma F factor, found in Clostridium kluyveri (strain NBRC 12016).